A 193-amino-acid polypeptide reads, in one-letter code: Probable GTP-binding protein EngB (193 aa).

The 174-residue stretch at 20 to 193 (GVPEVAFAGR…ELAHEISRCI (174 aa)) folds into the EngB-type G domain. GTP contacts are provided by residues 28 to 35 (GRSNVGKS), 55 to 59 (GSTRQ), 73 to 76 (DLPG), 140 to 143 (TKAD), and 171 to 176 (IMWVSS). Residues S35 and T57 each contribute to the Mg(2+) site.

This sequence belongs to the TRAFAC class TrmE-Era-EngA-EngB-Septin-like GTPase superfamily. EngB GTPase family. Mg(2+) is required as a cofactor.

Its function is as follows. Necessary for normal cell division and for the maintenance of normal septation. This chain is Probable GTP-binding protein EngB, found in Anaplasma phagocytophilum (strain HZ).